A 131-amino-acid chain; its full sequence is MPNSSSSKVPSIKAQHRIAKKRAVRRRRIDLDCGCSIYIHINCAKDGNGFTHMGRHHCASGREFRFYLGGSKSPLFQDVQXGGSTLHAHKDIPHTNPVQPQPEESTKSSQSVPELPSLDGIDSSFWDDIFE.

Positions lysine 13–arginine 28 match the Nuclear localization signal motif. The segment at cysteine 33 to histidine 52 is a zinc-finger region. Positions aspartate 78–glutamate 131 are disordered. A transactivation region spans residues serine 117–glutamate 131.

Belongs to the geminiviridae transcriptional activator protein family. In terms of assembly, monomer. Homodimer. Homooligomer. Self-interaction correlates with nuclear localization and efficient activation of transcription. Monomers suppress local silencing by interacting with and inactivating host adenosine kinase 2 (ADK2) in the cytoplasm. Interacts with and inhibits host SNF1 kinase. Binds to ssDNA. Phosphorylated.

Its subcellular location is the host nucleus. It localises to the host cytoplasm. Its function is as follows. Strong activator of the late viral genes promoters. Enhances the expression of the capsid protein and nuclear shuttle protein. Acts as a suppressor of RNA-mediated gene silencing, also known as post-transcriptional gene silencing (PTGS), a mechanism of plant viral defense that limits the accumulation of viral RNAs. Suppresses the host RNA silencing by inhibiting adenosine kinase 2 (ADK2), a kinase involved in a general methylation pathway. Also suppresses the host basal defense by interacting with and inhibiting SNF1 kinase, a key regulator of cell metabolism implicated in innate antiviral defense. Determines pathogenicity. This is Transcriptional activator protein from Cucurbita moschata (Winter crookneck squash).